Consider the following 529-residue polypeptide: Intraflagellar transport protein 56 (529 aa).

A disordered region spans residues 1–21 (MLHNRMTTAFERSKEQEHEAA). Basic and acidic residues predominate over residues 11–21 (ERSKEQEHEAA). TPR repeat units lie at residues 57-90 (GNADLWIAYCNFHLGRHEEALEIYTALKKSKNPP), 154-187 (SADQMALAAVHFLRTHYQQALECYEEVLQVQPEC), 189-221 (AIYMHMALCYYKLGDYLKSEEFLMLYRENAEDS), 285-321 (SEARQNLVKLYIEKGQYEDAYKVVQSFEPAVSAEYTL), 359-392 (VLGRRAMAAAYFLTGEFEEASMYLESIADIPKES), and 428-461 (PVHRTWLGRLLIRAQRSAEAFDLYRDAEKNSLQT).

It belongs to the IFT56 family.

Its subcellular location is the cell projection. The protein localises to the cilium. It localises to the flagellum. The protein resides in the cytoplasm. It is found in the cytoskeleton. Its subcellular location is the flagellum axoneme. The protein localises to the flagellum basal body. Its function is as follows. Component of the intraflagellar transport complex B (IFT-B) involved in flagellar assembly. The sequence is that of Intraflagellar transport protein 56 from Giardia intestinalis (strain ATCC 50803 / WB clone C6) (Giardia lamblia).